Here is a 231-residue protein sequence, read N- to C-terminus: MEEITINIDKIKINDDWKEFLRDEFQKKYFLEIKKQYLNAINQNIIIYPPANLIFNAFNLCPLKEIKIIILGQDPYHQPNQAMGLSFSVPKNVKIPPSLNNIFKELQNDLNITPAKSGDLSSWAKQGVLLLNSILSVEANKAASHSSWGWQEFSDAIIHKLSNEKSGLVFMLWGNYAKSKEILIDNTKHLILKAAHPSPLARTGFLGCKHFSKANEFLKKVGKIPIDWKIV.

The active-site Proton acceptor is Asp-74.

This sequence belongs to the uracil-DNA glycosylase (UDG) superfamily. UNG family.

Its subcellular location is the cytoplasm. It catalyses the reaction Hydrolyzes single-stranded DNA or mismatched double-stranded DNA and polynucleotides, releasing free uracil.. Excises uracil residues from the DNA which can arise as a result of misincorporation of dUMP residues by DNA polymerase or due to deamination of cytosine. The protein is Uracil-DNA glycosylase of Campylobacter jejuni subsp. jejuni serotype O:23/36 (strain 81-176).